We begin with the raw amino-acid sequence, 340 residues long: Protein-tyrosine-phosphatase PTP1 (340 aa).

The Tyrosine-protein phosphatase domain occupies 58–326; that stretch reads IAHEFTGLQA…FFCYNAIVDE (269 aa). Substrate contacts are provided by residues Asp-234, 265–271, and Gln-311; that span reads CSAGIGR. The active-site Phosphocysteine intermediate is the Cys-265.

In terms of assembly, interacts with MPK6. Interacts with KIN10. Phosphorylated by KIN10. Expressed in roots, stems and flowers, and at low levels in leaves.

It is found in the cytoplasm. The protein localises to the cytosol. Its subcellular location is the nucleus. It carries out the reaction O-phospho-L-tyrosyl-[protein] + H2O = L-tyrosyl-[protein] + phosphate. Its activity is regulated as follows. Inhibited by hydrogen peroxide. Functionally, protein-tyrosine-phosphatase that dephosphorylates and probably inhibits MPK6 in non-oxidative stress conditions. In association with MKP1, represses salicylic acid (SA) and camalexin biosynthesis, thus modulating defense response. May also repress MPK3. Dephosphorylates and inactivates MPK4 in vitro. The polypeptide is Protein-tyrosine-phosphatase PTP1 (PTP1) (Arabidopsis thaliana (Mouse-ear cress)).